Consider the following 168-residue polypeptide: DNA damage-inducible transcript 3 protein (168 aa).

Positions 10 to 18 (FGALSSWEL) are interaction with TRIB3. Residues 10–26 (FGALSSWELEAWYEDLQ) are N-terminal. A phosphoserine; by CK2 mark is found at S14, S15, S30, and S31. The interval 31-141 (SDENRGTCVS…QLAEENERLK (111 aa)) is disordered. Residues 76–90 (SQSPCSPESSQSSLA) show a composition bias toward low complexity. Phosphoserine; by MAPK14 is present on residues S78 and S81. In terms of domain architecture, bZIP spans 98-161 (QGRTRKRKQS…EATRRALIDR (64 aa)). Residues 100–129 (RTRKRKQSGQSPARAGKQRMKEKEQENERK) form a basic motif region. Residues 118–141 (RMKEKEQENERKVAQLAEENERLK) show a composition bias toward basic and acidic residues. Positions 133 to 147 (LAEENERLKQEIERL) are leucine-zipper.

The protein belongs to the bZIP family. Heterodimer. Interacts with TCF7L2/TCF4, EP300/P300, HDAC1, HDAC5 and HDAC6. Interacts with TRIB3 which blocks its association with EP300/P300. Interacts with FOXO3, CEBPB and ATF4. Ubiquitinated, leading to its degradation by the proteasome. Post-translationally, phosphorylation at serine residues by MAPK14 enhances its transcriptional activation activity while phosphorylation at serine residues by CK2 inhibits its transcriptional activation activity.

The protein localises to the cytoplasm. It localises to the nucleus. Its function is as follows. Multifunctional transcription factor in ER stress response. Plays an essential role in the response to a wide variety of cell stresses and induces cell cycle arrest and apoptosis in response to ER stress. Plays a dual role both as an inhibitor of CCAAT/enhancer-binding protein (C/EBP) function and as an activator of other genes. Acts as a dominant-negative regulator of C/EBP-induced transcription: dimerizes with members of the C/EBP family, impairs their association with C/EBP binding sites in the promoter regions, and inhibits the expression of C/EBP regulated genes. Positively regulates the transcription of TRIB3, IL6, IL8, IL23, TNFRSF10B/DR5, PPP1R15A/GADD34, BBC3/PUMA, BCL2L11/BIM and ERO1L. Negatively regulates; expression of BCL2 and MYOD1, ATF4-dependent transcriptional activation of asparagine synthetase (ASNS), CEBPA-dependent transcriptional activation of hepcidin (HAMP) and CEBPB-mediated expression of peroxisome proliferator-activated receptor gamma (PPARG). Inhibits the canonical Wnt signaling pathway by binding to TCF7L2/TCF4, impairing its DNA-binding properties and repressing its transcriptional activity. Plays a regulatory role in the inflammatory response through the induction of caspase-11 (CASP4/CASP11) which induces the activation of caspase-1 (CASP1) and both these caspases increase the activation of pro-IL1B to mature IL1B which is involved in the inflammatory response. In Bos taurus (Bovine), this protein is DNA damage-inducible transcript 3 protein (DDIT3).